Consider the following 187-residue polypeptide: Putative manganese efflux pump MntP (187 aa).

The next 6 helical transmembrane spans lie at 3 to 23, 39 to 59, 65 to 85, 103 to 123, 124 to 144, and 166 to 186; these read WLTI…VALA, LGFH…LLGM, ISAY…GRMV, GMTM…VGLS, IAML…VAGV, and ICGG…HTLL.

It belongs to the MntP (TC 9.B.29) family.

The protein localises to the cell inner membrane. Functionally, probably functions as a manganese efflux pump. The chain is Putative manganese efflux pump MntP from Geobacter sp. (strain M21).